We begin with the raw amino-acid sequence, 539 residues long: CTP synthase (539 aa).

Positions 1–267 (MTKYIFVTGG…DQKVVDFLHI (267 aa)) are amidoligase domain. A CTP-binding site is contributed by Ser-13. Ser-13 contacts UTP. 14-19 (SLGKGI) serves as a coordination point for ATP. Tyr-54 is an L-glutamine binding site. Asp-71 lines the ATP pocket. Residues Asp-71 and Glu-141 each contribute to the Mg(2+) site. Residues 148 to 150 (DME), 188 to 193 (KSKPTQ), and Lys-224 contribute to the CTP site. UTP contacts are provided by residues 188–193 (KSKPTQ) and Lys-224. The Glutamine amidotransferase type-1 domain maps to 294 to 537 (KITLVGKYVE…IGAASGLQVD (244 aa)). Gly-356 lines the L-glutamine pocket. Cys-383 (nucleophile; for glutamine hydrolysis) is an active-site residue. Residues 384-387 (LGMQ), Glu-407, and Arg-465 contribute to the L-glutamine site. Active-site residues include His-510 and Glu-512.

It belongs to the CTP synthase family. In terms of assembly, homotetramer.

The enzyme catalyses UTP + L-glutamine + ATP + H2O = CTP + L-glutamate + ADP + phosphate + 2 H(+). It catalyses the reaction L-glutamine + H2O = L-glutamate + NH4(+). The catalysed reaction is UTP + NH4(+) + ATP = CTP + ADP + phosphate + 2 H(+). It functions in the pathway pyrimidine metabolism; CTP biosynthesis via de novo pathway; CTP from UDP: step 2/2. Its activity is regulated as follows. Allosterically activated by GTP, when glutamine is the substrate; GTP has no effect on the reaction when ammonia is the substrate. The allosteric effector GTP functions by stabilizing the protein conformation that binds the tetrahedral intermediate(s) formed during glutamine hydrolysis. Inhibited by the product CTP, via allosteric rather than competitive inhibition. Catalyzes the ATP-dependent amination of UTP to CTP with either L-glutamine or ammonia as the source of nitrogen. Regulates intracellular CTP levels through interactions with the four ribonucleotide triphosphates. In Lactobacillus delbrueckii subsp. bulgaricus (strain ATCC BAA-365 / Lb-18), this protein is CTP synthase.